The chain runs to 348 residues: Phosphate acyltransferase (348 aa).

It belongs to the PlsX family. In terms of assembly, homodimer. Probably interacts with PlsY.

The protein localises to the cytoplasm. The enzyme catalyses a fatty acyl-[ACP] + phosphate = an acyl phosphate + holo-[ACP]. It functions in the pathway lipid metabolism; phospholipid metabolism. Functionally, catalyzes the reversible formation of acyl-phosphate (acyl-PO(4)) from acyl-[acyl-carrier-protein] (acyl-ACP). This enzyme utilizes acyl-ACP as fatty acyl donor, but not acyl-CoA. This Nitrosomonas europaea (strain ATCC 19718 / CIP 103999 / KCTC 2705 / NBRC 14298) protein is Phosphate acyltransferase.